Consider the following 262-residue polypeptide: NAC domain-containing protein 71 (262 aa).

The NAC domain maps to 6 to 160 (LPPGFRFHPT…AFALCRVVKK (155 aa)). The DNA-binding element occupies 107-166 (AGYRKTLVFYEGRAPLGDRTNWFMHEYRLCDIDDHSQKSPNFKGAFALCRVVKKNELKKN).

The protein resides in the nucleus. In terms of biological role, transcription factor involved in tissue reunion of wounded inflorescence stems. Required for the division of pith cells in the reunion process, which is dependent on polar-transported auxin and the wound-inducible hormones ethylene and jasmonate. Binds to the promoters of XTH19 and XTH20 to induce their expression via auxin signaling. XTH19 and XTH20 are involved in cell proliferation in the tissue reunion process of incised stems. Involved in hypocotyl graft union formation. Required for the auxin- mediated promotion of vascular tissue proliferation during hypocotyl graft attachment. This Arabidopsis thaliana (Mouse-ear cress) protein is NAC domain-containing protein 71.